Consider the following 374-residue polypeptide: Fe(2+) transport protein 1 (374 aa).

Residues 1–33 (MATPRTLVPILPPVAALLLLLVAASSIPILAAA) form the signal peptide. The Extracellular portion of the chain corresponds to 34–62 (QPADACGGAPDQAAADGACHDVPRALRLK). Residues 63-83 (LIAIPTILVSSVVGVCLPLLS) traverse the membrane as a helical segment. Residues 84 to 92 (RSVPALRPD) are Cytoplasmic-facing. The helical transmembrane segment at 93–113 (GGLFAVVKAFASGVILATGYM) threads the bilayer. Over 114 to 137 (HVLPDAFNNLTSPCLPRKPWSEFP) the chain is Extracellular. Residues 138–158 (FAAFVAMLAAVSTLMADSLML) traverse the membrane as a helical segment. Residues 159-219 (TYYNRSKPRP…ATQVQLRRNR (61 aa)) are Cytoplasmic-facing. A disordered region spans residues 166 to 199 (PRPSSGGDVAAVADHGESPDQGHRHGHGHGHGHG). Basic and acidic residues predominate over residues 179–188 (DHGESPDQGH). The chain crosses the membrane as a helical span at residues 220–240 (VVVQVLEIGIVVHSVVIGLGM). The Extracellular segment spans residues 241 to 251 (GASQNVCTIRP). A helical transmembrane segment spans residues 252–272 (LVAAMCFHQMFEGMGLGGCIL). Over 273-282 (QAEYGRRMRS) the chain is Cytoplasmic. A helical transmembrane segment spans residues 283–303 (VLVFFFSTTTPFGIALGLALT). The Extracellular segment spans residues 304-313 (RVYRDNSPTA). The helical transmembrane segment at 314–334 (LIVVGLLNAASAGLLHYMALV) threads the bilayer. The Cytoplasmic portion of the chain corresponds to 335–353 (ELLAADFMGPKLQGNVRLQ). The chain crosses the membrane as a helical span at residues 354–374 (LAAFLAVLLGAGGMSVMAKWA).

Belongs to the ZIP transporter (TC 2.A.5) family. In terms of tissue distribution, expressed in companion cells in the upper region of the root.

The protein localises to the cell membrane. Its function is as follows. Iron transporter involved in the uptake of iron from the rhizosphere across the plasma membrane in the root epidermal layer. May also transport other divalent cations. The chain is Fe(2+) transport protein 1 (IRT1) from Oryza sativa subsp. japonica (Rice).